A 563-amino-acid chain; its full sequence is Glutamate--tRNA ligase (563 aa).

The tract at residues 61–94 (PEEQQKEVESLGGLEQHTKKEEKPKGLPELKNTE) is disordered. Positions 76-94 (QHTKKEEKPKGLPELKNTE) are enriched in basic and acidic residues. The short motif at 104 to 114 (PNPSGPLHIGH) is the 'HIGH' region element.

This sequence belongs to the class-I aminoacyl-tRNA synthetase family. Glutamate--tRNA ligase type 2 subfamily.

It is found in the cytoplasm. It catalyses the reaction tRNA(Glu) + L-glutamate + ATP = L-glutamyl-tRNA(Glu) + AMP + diphosphate. Its function is as follows. Catalyzes the attachment of glutamate to tRNA(Glu) in a two-step reaction: glutamate is first activated by ATP to form Glu-AMP and then transferred to the acceptor end of tRNA(Glu). The sequence is that of Glutamate--tRNA ligase from Methanosphaera stadtmanae (strain ATCC 43021 / DSM 3091 / JCM 11832 / MCB-3).